The following is a 160-amino-acid chain: Endoribonuclease YbeY (160 aa).

Residues histidine 125, histidine 129, and histidine 135 each contribute to the Zn(2+) site.

Belongs to the endoribonuclease YbeY family. Zn(2+) is required as a cofactor.

Its subcellular location is the cytoplasm. Its function is as follows. Single strand-specific metallo-endoribonuclease involved in late-stage 70S ribosome quality control and in maturation of the 3' terminus of the 16S rRNA. The protein is Endoribonuclease YbeY of Leuconostoc mesenteroides subsp. mesenteroides (strain ATCC 8293 / DSM 20343 / BCRC 11652 / CCM 1803 / JCM 6124 / NCDO 523 / NBRC 100496 / NCIMB 8023 / NCTC 12954 / NRRL B-1118 / 37Y).